The following is a 241-amino-acid chain: DNA repair protein RecO (241 aa).

The protein belongs to the RecO family.

In terms of biological role, involved in DNA repair and RecF pathway recombination. This chain is DNA repair protein RecO, found in Vibrio cholerae serotype O1 (strain ATCC 39541 / Classical Ogawa 395 / O395).